The primary structure comprises 202 residues: V-type proton ATPase subunit E (202 aa).

This sequence belongs to the V-ATPase E subunit family.

Functionally, produces ATP from ADP in the presence of a proton gradient across the membrane. This is V-type proton ATPase subunit E from Halothermothrix orenii (strain H 168 / OCM 544 / DSM 9562).